The chain runs to 96 residues: UPF0235 protein Spro_4033 (96 aa).

This sequence belongs to the UPF0235 family.

The polypeptide is UPF0235 protein Spro_4033 (Serratia proteamaculans (strain 568)).